We begin with the raw amino-acid sequence, 445 residues long: Arginine/agmatine antiporter (445 aa).

The Cytoplasmic portion of the chain corresponds to 1–9; it reads MSSDADAHK. A helical membrane pass occupies residues 10–30; it reads VGLIPVTLMVSGNIMGSGVFL. Isoleucine 23 lines the agmatine pocket. The L-arginine site is built by isoleucine 23 and serine 26. At 31-38 the chain is on the periplasmic side; sequence LPANLAAT. A helical transmembrane segment spans residues 39 to 59; the sequence is GGIAIYGWLVTIIGALALSMV. The Cytoplasmic segment spans residues 60–98; sequence YAKMSSLDPSPGGSYAYARRCFGPFLGYQTNVLYWLACW. Alanine 96, cysteine 97, and asparagine 101 together coordinate agmatine. Alanine 96 serves as a coordination point for L-arginine. A helical membrane pass occupies residues 99 to 119; that stretch reads IGNIAMVVIGVGYLSYFFPIL. Residues 120–122 lie on the Periplasmic side of the membrane; sequence KDP. Residues 123–143 form a helical membrane-spanning segment; sequence LVLTLTCVAVLWIFVLLNIVG. Residues 144-152 lie on the Cytoplasmic side of the membrane; sequence PKMITRVQA. Residues 153–173 form a helical membrane-spanning segment; that stretch reads VATVLALVPIVGIAVFGWFWF. Residues 174 to 196 lie on the Periplasmic side of the membrane; sequence KGETYMAAWNVSGMNTFGAIQST. The chain crosses the membrane as a helical span at residues 197–217; that stretch reads LNVTLWSFIGVESASVAAGVV. Residues tryptophan 202 and isoleucine 205 each contribute to the L-arginine site. Position 205 (isoleucine 205) interacts with agmatine. Residues 218-225 lie on the Cytoplasmic side of the membrane; the sequence is KNPKRNVP. The chain crosses the membrane as a helical span at residues 226-246; that stretch reads IATIGGVLIAAVCYVLSTTAI. At 247 to 275 the chain is on the periplasmic side; sequence MGMIPNAALRVSASPFGDAARMALGDTAG. The helical transmembrane segment at 276–296 threads the bilayer; the sequence is AIVSFCAAAGCLGSLGGWTLL. Position 293 (tryptophan 293) interacts with agmatine. The Cytoplasmic segment spans residues 297–319; it reads AGQTAKAAADDGLFPPIFARVNK. A helical membrane pass occupies residues 320–340; sequence AGTPVAGLLIVGVLMTIFQFS. Residues 341–355 lie on the Periplasmic side of the membrane; it reads SMSPNAAKEFGLVSS. Residues 356–376 form a helical membrane-spanning segment; the sequence is VSVIFTLVPYLYTCAALLLLG. Serine 357 contacts L-arginine. The Cytoplasmic portion of the chain corresponds to 377 to 385; the sequence is HGHFGKARP. A helical membrane pass occupies residues 386–406; the sequence is LYLLITFVAFVYCIWAVIGSG. Topologically, residues 407–408 are periplasmic; it reads AK. A helical transmembrane segment spans residues 409 to 429; sequence EVMWSFVTLMVITALYALNYN. The Cytoplasmic segment spans residues 430–445; the sequence is RIHKNPYPLDAPVKQD.

It belongs to the amino acid-polyamine-organocation (APC) superfamily. Basic amino acid/polyamine antiporter (APA) (TC 2.A.3.2) family. In terms of assembly, homodimer; each subunit has its own individual transport capacity.

The protein localises to the cell inner membrane. It carries out the reaction agmatine(in) + L-arginine(out) = agmatine(out) + L-arginine(in). Major component of the acid-resistance (AR) system allowing enteric pathogens to survive the acidic environment in the stomach. Exchanges extracellular arginine for its intracellular decarboxylation product agmatine (Agm) thereby expelling intracellular protons. Probably undergoes several conformational states in order to translocate the substrate across the membrane; keeps the substrate accessible to only 1 side of the membrane at a time by opening and closing 3 membrane-internal gates. The protein is Arginine/agmatine antiporter (adiC) of Salmonella typhi.